We begin with the raw amino-acid sequence, 91 residues long: Small ribosomal subunit protein bS6 (91 aa).

The protein belongs to the bacterial ribosomal protein bS6 family.

Its function is as follows. Binds together with bS18 to 16S ribosomal RNA. The sequence is that of Small ribosomal subunit protein bS6 from Leptospira interrogans serogroup Icterohaemorrhagiae serovar copenhageni (strain Fiocruz L1-130).